The primary structure comprises 744 residues: Cullin-3 (744 aa).

Positions 677–736 (MELSAIIVRIMKTEGKLSHQQLLERTTKRTQSRLSLTPSILKRSIQLLIEKEYIQRNADD) constitute a Cullin neddylation domain. A Glycyl lysine isopeptide (Lys-Gly) (interchain with G-Cter in NEDD8) cross-link involves residue Lys-688.

Belongs to the cullin family. In terms of assembly, component of a ubiquitin-protein ligase complex consisting of the cullin CUL3, the linker protein ELC1, the substrate receptor ELA1, and the RING protein HRT1. Neddylated; enhancing the ubiquitin-ligase activity.

Its pathway is protein modification; protein ubiquitination. Functionally, as part of the CRL3 E3 ubiquitin ligase complex; polyubiquitylates monoubiquitylated RNA polymerase II subunit RPO21 to trigger its proteolysis; plays a role in global genomic repair. The sequence is that of Cullin-3 (CUL3) from Saccharomyces cerevisiae (strain ATCC 204508 / S288c) (Baker's yeast).